The following is a 931-amino-acid chain: Probable ubiquitin-like-specific protease 2B (931 aa).

Residues 204 to 224 form a disordered region; that stretch reads SLSDRSALSEASDSEDDEEDW. The span at 215 to 224 shows a compositional bias: acidic residues; sequence SDSEDDEEDW. Active-site residues include His-489, Asp-522, and Cys-577. Residues 825–931 are disordered; that stretch reads HEEEIDESPP…PTGEAEEMEK (107 aa). Residues 839 to 851 show a composition bias toward polar residues; that stretch reads SLKSATVGSNTAD. The segment covering 873–904 has biased composition (basic and acidic residues); sequence NDRDEEKPLEHDLEIGDKTSEDVGDDCDQKEP.

It belongs to the peptidase C48 family.

In terms of biological role, protease that catalyzes two essential functions in the SUMO pathway: processing of full-length SUMOs to their mature forms and deconjugation of SUMO from targeted proteins. The protein is Probable ubiquitin-like-specific protease 2B (ULP2B) of Arabidopsis thaliana (Mouse-ear cress).